The primary structure comprises 330 residues: Beta-ketoacyl-[acyl-carrier-protein] synthase III (330 aa).

Residues C114 and H257 contribute to the active site. Positions 258-262 are ACP-binding; sequence QANLR. N287 is an active-site residue.

It belongs to the thiolase-like superfamily. FabH family. As to quaternary structure, homodimer.

It localises to the cytoplasm. The enzyme catalyses malonyl-[ACP] + acetyl-CoA + H(+) = 3-oxobutanoyl-[ACP] + CO2 + CoA. It functions in the pathway lipid metabolism; fatty acid biosynthesis. Its function is as follows. Catalyzes the condensation reaction of fatty acid synthesis by the addition to an acyl acceptor of two carbons from malonyl-ACP. Catalyzes the first condensation reaction which initiates fatty acid synthesis and may therefore play a role in governing the total rate of fatty acid production. Possesses both acetoacetyl-ACP synthase and acetyl transacylase activities. Its substrate specificity determines the biosynthesis of branched-chain and/or straight-chain of fatty acids. The chain is Beta-ketoacyl-[acyl-carrier-protein] synthase III from Oleidesulfovibrio alaskensis (strain ATCC BAA-1058 / DSM 17464 / G20) (Desulfovibrio alaskensis).